The following is a 527-amino-acid chain: Serine/threonine-protein kinase NLK (527 aa).

Sufficient for interaction with DAPK3 regions lie at residues 1–125 and 124–416; these read MSLC…KAHH and HHHQ…SKRI. Required for interaction with TAB2 regions lie at residues 1–304 and 434–527; these read MSLC…VVTQ and YHTC…LVWE. Disordered regions lie at residues 22-72 and 90-139; these read AAAA…SSAA and QQPY…LDIE. A compositionally biased stretch (basic residues) spans 26–54; that stretch reads GHHHHHHHHLPHLPPPHLHHHHHPQHHLH. A compositionally biased stretch (low complexity) spans 103–119; the sequence is PGPAAAAPAQVQAAAAA. The span at 122–131 shows a compositional bias: basic residues; the sequence is KAHHHQHSHH. The Protein kinase domain occupies 138-427; that stretch reads IEPDRPIGYG…AKDALAHPYL (290 aa). ATP-binding positions include 144-152 and Lys-167; that span reads IGYGAFGVV. Asp-264 acts as the Proton acceptor in catalysis. Phosphothreonine; by autocatalysis is present on Thr-298. The TQE motif lies at 298–300; it reads TQE. The interval 428–527 is required for homodimerization and kinase activation and localization to the nucleus; it reads DEGRLRYHTC…EMPPSPLVWE (100 aa). The residue at position 522 (Ser-522) is a Phosphoserine.

Belongs to the protein kinase superfamily. CMGC Ser/Thr protein kinase family. MAP kinase subfamily. As to quaternary structure, homodimer. Homodimerization is required for intermolecular autophosphorylation, kinase activation and nuclear localization. Interacts with RNF138/NARF. Interacts with FOXO1 and FOXO3. Interacts with the upstream activating kinases HIPK2 and MAP3K7/TAK1. Interaction with MAP3K7/TAK1 seems to be indirect, and may be mediated by other proteins such as STAT3, TAB1 and TAB2. Interacts with and phosphorylates a number of transcription factors including FOXO4, LEF1, MYB, MYBL1, MYBL2, NOTCH1 and TCF7L2/TCF4. May interact with components of cullin-RING-based SCF (SKP1-CUL1-F-box protein) E3 ubiquitin-protein ligase complexes. Interacts with MEF2A. Interacts with ATF5; the interaction stabilizes ATF5 at the protein level in a kinase-independent manner. Requires Mg(2+) as cofactor. In terms of processing, phosphorylated on Thr-298. Intermolecular autophosphorylation on Thr-298 activates the enzyme. In terms of tissue distribution, expressed at high levels in the brain, and at lower levels in heart, kidney, lung and liver.

The protein localises to the nucleus. It is found in the cytoplasm. It catalyses the reaction L-seryl-[protein] + ATP = O-phospho-L-seryl-[protein] + ADP + H(+). The catalysed reaction is L-threonyl-[protein] + ATP = O-phospho-L-threonyl-[protein] + ADP + H(+). Its activity is regulated as follows. Activated by the non-canonical Wnt signaling pathway, in which WNT5A leads to activation of MAP3K7/TAK1 and HIPK2, which subsequently phosphorylates and activates this protein. Activated by dimerization and subsequent intermolecular autophosphorylation on Thr-298. Other cytokines such as IL6 may also activate this regulatory circuit. Functionally, serine/threonine-protein kinase that regulates a number of transcription factors with key roles in cell fate determination. Positive effector of the non-canonical Wnt signaling pathway, acting downstream of WNT5A, MAP3K7/TAK1 and HIPK2. Negative regulator of the canonical Wnt/beta-catenin signaling pathway. Binds to and phosphorylates TCF7L2/TCF4 and LEF1, promoting the dissociation of the TCF7L2/LEF1/beta-catenin complex from DNA, as well as the ubiquitination and subsequent proteolysis of LEF1. Together these effects inhibit the transcriptional activation of canonical Wnt/beta-catenin target genes. Negative regulator of the Notch signaling pathway. Binds to and phosphorylates NOTCH1, thereby preventing the formation of a transcriptionally active ternary complex of NOTCH1, RBPJ/RBPSUH and MAML1. Negative regulator of the MYB family of transcription factors. Phosphorylation of MYB leads to its subsequent proteolysis while phosphorylation of MYBL1 and MYBL2 inhibits their interaction with the coactivator CREBBP. Other transcription factors may also be inhibited by direct phosphorylation of CREBBP itself. Acts downstream of IL6 and MAP3K7/TAK1 to phosphorylate STAT3, which is in turn required for activation of NLK by MAP3K7/TAK1. Upon IL1B stimulus, cooperates with ATF5 to activate the transactivation activity of C/EBP subfamily members. Phosphorylates ATF5 but also stabilizes ATF5 protein levels in a kinase-independent manner. Acts as an inhibitor of the mTORC1 complex in response to osmotic stress by mediating phosphorylation of RPTOR, thereby preventing recruitment of the mTORC1 complex to lysosomes. This is Serine/threonine-protein kinase NLK from Mus musculus (Mouse).